The chain runs to 3206 residues: Highly reducing polyketide synthase ltbA (3206 aa).

A Ketosynthase family 3 (KS3) domain is found at 5–434 (PAPIAIIGVG…GTNCHVILEA (430 aa)). Residues Cys-179, His-314, and His-354 each act as for beta-ketoacyl synthase activity in the active site. Over residues 441–463 (PTGTNGIKTNGTRINGIKTNGAD) the composition is skewed to polar residues. A disordered region spans residues 441-472 (PTGTNGIKTNGTRINGIKTNGADTNERESMKN). The malonyl-CoA:ACP transacylase (MAT) domain stretch occupies residues 575-890 (VFSGQGAQWH…EYLSALQRNT (316 aa)). The tract at residues 958–1098 (HDLLGLFDPA…GEITVEYETD (141 aa)) is N-terminal hotdog fold. The interval 958–1278 (HDLLGLFDPA…LLVNLRAIGE (321 aa)) is dehydratase (DH) domain. Positions 958–1284 (HDLLGLFDPA…AIGETREDED (327 aa)) constitute a PKS/mFAS DH domain. Catalysis depends on His-990, which acts as the Proton acceptor; for dehydratase activity. The C-terminal hotdog fold stretch occupies residues 1128–1284 (DTDMTKSEFY…AIGETREDED (157 aa)). Catalysis depends on Asp-1193, which acts as the Proton donor; for dehydratase activity. Residues 1450-1640 (ESGILVGPYE…LARNGFGGIH (191 aa)) are methyltransferase (CMet) domain. The tract at residues 1871–2185 (LLSSLRFVDD…RKHTGKVVLQ (315 aa)) is enoyl reductase (ER) domain. A ketoreductase (KR) domain region spans residues 2208–2395 (GTYVAAGGLG…SVDAHGALKE (188 aa)). Residues 2499–2577 (EEAEQLIRDA…ALAATVASRS (79 aa)) form the Carrier domain. The residue at position 2537 (Ser-2537) is an O-(pantetheine 4'-phosphoryl)serine. The tract at residues 2584–2611 (IRHSSRLQEATTQAENKDAPKNEKEGPS) is disordered. Positions 2598–2610 (ENKDAPKNEKEGP) are enriched in basic and acidic residues. The carnitine O-acyltransferase (cAT) domain stretch occupies residues 2994–3206 (HLIPSFGKAV…IKTIIQAGQE (213 aa)).

Pantetheine 4'-phosphate serves as cofactor.

It functions in the pathway secondary metabolite biosynthesis. In terms of biological role, highly reducing polyketide synthase; part of the gene cluster that mediates the biosynthesis of luteodienoside A, a glycosylated polyketide consisting of an unusual 1-O-beta-D-glucopyranosyl-myo-inositol (glucinol) ester of 3-hydroxy-2,2,4-trimethylocta-4,6-dienoic acid. LtbA produces the trimethylated polyketide chain from acetyl-CoA, malonyl-CoA and S-adenosylmethionine (SAM). The ltbA carnitine O-acyltransferase (cAT) domain then uses glucinol produced by the glycosyltransferase ltbB as an offloading substrate to release luteodienoside A. Furthermore, the PKS C-methyltransferase (CMeT) domain is capable of catalysing gem-dimethylation of the 3-hydroxy-2,2,4-trimethylocta-4,6-dienoic acid intermediate, without requiring reversible product release and recapture by the cAT domain. Since ltbA and ltbB are sufficient for the biosynthesis of luteodienoside A, the functions of the methyltransferase ltbC and the FAD-binding monooxygenase ltbD within the pathway remain obscur. The sequence is that of Highly reducing polyketide synthase ltbA from Aspergillus luteorubrus.